We begin with the raw amino-acid sequence, 559 residues long: NXPE family member 3 (559 aa).

Positions 1–30 (MWTNFFKLRLFCCLLAVLMVVVLVVNVTQV) are cleaved as a signal peptide. N26, N237, and N346 each carry an N-linked (GlcNAc...) asparagine glycan.

It belongs to the NXPE family.

Its subcellular location is the secreted. This chain is NXPE family member 3 (NXPE3), found in Pongo abelii (Sumatran orangutan).